A 314-amino-acid chain; its full sequence is Probable manganese-dependent inorganic pyrophosphatase (314 aa).

His-7, Asp-11, Asp-13, Asp-72, His-94, and Asp-146 together coordinate Mn(2+).

The protein belongs to the PPase class C family. Mn(2+) serves as cofactor.

It is found in the cytoplasm. The catalysed reaction is diphosphate + H2O = 2 phosphate + H(+). In Deinococcus radiodurans (strain ATCC 13939 / DSM 20539 / JCM 16871 / CCUG 27074 / LMG 4051 / NBRC 15346 / NCIMB 9279 / VKM B-1422 / R1), this protein is Probable manganese-dependent inorganic pyrophosphatase (ppaC).